Reading from the N-terminus, the 218-residue chain is Histone H1 (218 aa).

Residues methionine 1–alanine 19 show a composition bias toward low complexity. 2 disordered regions span residues methionine 1–threonine 42 and valine 89–lysine 218. Position 2 is an N-acetylserine (serine 2). The 74-residue stretch at alanine 37–lysine 110 folds into the H15 domain. 4 stretches are compositionally biased toward basic residues: residues lysine 118–alanine 133, lysine 141–lysine 158, lysine 166–alanine 184, and lysine 191–lysine 218.

This sequence belongs to the histone H1/H5 family.

Its subcellular location is the nucleus. It is found in the chromosome. Functionally, histones H1 are necessary for the condensation of nucleosome chains into higher-order structures. The polypeptide is Histone H1 (Gallus gallus (Chicken)).